Here is a 155-residue protein sequence, read N- to C-terminus: Ribosome maturation factor RimP (155 aa).

Belongs to the RimP family.

The protein localises to the cytoplasm. Required for maturation of 30S ribosomal subunits. This chain is Ribosome maturation factor RimP, found in Parabacteroides distasonis (strain ATCC 8503 / DSM 20701 / CIP 104284 / JCM 5825 / NCTC 11152).